Consider the following 403-residue polypeptide: Ribosomal RNA large subunit methyltransferase I (403 aa).

Positions 9–88 (YPRLVLSKGR…ESIDIAFFTR (80 aa)) constitute a PUA domain.

The protein belongs to the methyltransferase superfamily. RlmI family.

The protein resides in the cytoplasm. The catalysed reaction is cytidine(1962) in 23S rRNA + S-adenosyl-L-methionine = 5-methylcytidine(1962) in 23S rRNA + S-adenosyl-L-homocysteine + H(+). Its function is as follows. Specifically methylates the cytosine at position 1962 (m5C1962) of 23S rRNA. The chain is Ribosomal RNA large subunit methyltransferase I from Salmonella schwarzengrund (strain CVM19633).